The following is a 436-amino-acid chain: 3-ketoacyl-CoA thiolase (436 aa).

Cysteine 99 acts as the Acyl-thioester intermediate in catalysis. Catalysis depends on proton acceptor residues histidine 392 and cysteine 422.

The protein belongs to the thiolase-like superfamily. Thiolase family. In terms of assembly, heterotetramer of two alpha chains (FadJ) and two beta chains (FadI).

It localises to the cytoplasm. It carries out the reaction an acyl-CoA + acetyl-CoA = a 3-oxoacyl-CoA + CoA. Its pathway is lipid metabolism; fatty acid beta-oxidation. Functionally, catalyzes the final step of fatty acid oxidation in which acetyl-CoA is released and the CoA ester of a fatty acid two carbons shorter is formed. In Shigella boydii serotype 4 (strain Sb227), this protein is 3-ketoacyl-CoA thiolase.